We begin with the raw amino-acid sequence, 103 residues long: Pterin-4-alpha-carbinolamine dehydratase 2 (103 aa).

This sequence belongs to the pterin-4-alpha-carbinolamine dehydratase family. As to expression, highest level found in the kidney, liver, heart and ovarian follicles.

It carries out the reaction (4aS,6R)-4a-hydroxy-L-erythro-5,6,7,8-tetrahydrobiopterin = (6R)-L-erythro-6,7-dihydrobiopterin + H2O. Involved in tetrahydrobiopterin biosynthesis. Seems to both prevent the formation of 7-pterins and accelerate the formation of quinonoid-BH2. In terms of biological role, regulates the dimerization of homeodomain protein HNF-1-alpha and enhances its transcriptional activity. This is Pterin-4-alpha-carbinolamine dehydratase 2 (PCBD2) from Gallus gallus (Chicken).